The following is a 275-amino-acid chain: uncharacterized protein (275 aa).

The ABC transmembrane type-1 domain maps to 1–162; the sequence is NLFSVIVSLI…ITSYWTEVQR (162 aa). The next 3 helical transmembrane spans lie at 21-41, 106-126, and 137-157; these read LYLVCTLPILIIVILPIGNIM, IMNLILFINIFGILFLGYYLM, and FAYVLYLFQIINPIVSITSYW.

It is found in the cell membrane. This is an uncharacterized protein from Staphylococcus epidermidis.